We begin with the raw amino-acid sequence, 622 residues long: ATP-dependent lipid A-core flippase (622 aa).

The next 5 helical transmembrane spans lie at 32–52 (IVAA…LAAF), 91–111 (VWGT…LVVI), 192–212 (IVLL…FPLL), 286–306 (SPFS…IALW), and 312–332 (YTTI…YAPI). Residues 33 to 344 (VAALIAIFGV…LANISIPMQT (312 aa)) form the ABC transmembrane type-1 domain. Residues 378 to 611 (FRNVDVEYRS…NGYYTMLRNI (234 aa)) enclose the ABC transporter domain. 410 to 417 (GRSGSGKS) contacts ATP.

It belongs to the ABC transporter superfamily. Lipid exporter (TC 3.A.1.106) family. Homodimer.

The protein resides in the cell inner membrane. The catalysed reaction is ATP + H2O + lipid A-core oligosaccharideSide 1 = ADP + phosphate + lipid A-core oligosaccharideSide 2.. In terms of biological role, involved in lipopolysaccharide (LPS) biosynthesis. Translocates lipid A-core from the inner to the outer leaflet of the inner membrane. Transmembrane domains (TMD) form a pore in the inner membrane and the ATP-binding domain (NBD) is responsible for energy generation. This Neisseria gonorrhoeae (strain ATCC 700825 / FA 1090) protein is ATP-dependent lipid A-core flippase.